A 292-amino-acid polypeptide reads, in one-letter code: Small ribosomal subunit biogenesis GTPase RsgA (292 aa).

The CP-type G domain occupies 64-221; sequence RSELFRPAVA…LVDTPGFSSL (158 aa). Residues 113–116 and 164–172 each bind GTP; these read NKMD and GPSGVGKST. 4 residues coordinate Zn(2+): Cys245, Cys250, His252, and Cys258.

It belongs to the TRAFAC class YlqF/YawG GTPase family. RsgA subfamily. As to quaternary structure, monomer. Associates with 30S ribosomal subunit, binds 16S rRNA. The cofactor is Zn(2+).

Its subcellular location is the cytoplasm. Functionally, one of several proteins that assist in the late maturation steps of the functional core of the 30S ribosomal subunit. Helps release RbfA from mature subunits. May play a role in the assembly of ribosomal proteins into the subunit. Circularly permuted GTPase that catalyzes slow GTP hydrolysis, GTPase activity is stimulated by the 30S ribosomal subunit. The polypeptide is Small ribosomal subunit biogenesis GTPase RsgA (Clostridium botulinum (strain Kyoto / Type A2)).